The following is a 932-amino-acid chain: Lipoxygenase 2.2, chloroplastic (932 aa).

Residues 79-219 form the PLAT domain; the sequence is MKATVSVHMK…CSPDKRTFFP (141 aa). One can recognise a Lipoxygenase domain in the interval 223–932; that stretch reads SYIPSQTPKG…EMGIPNSISI (710 aa). A compositionally biased stretch (basic and acidic residues) spans 270–284; it reads PESKRPVLGGKEHPY. The segment at 270 to 311 is disordered; that stretch reads PESKRPVLGGKEHPYPRRCRTGRPRSKTDPSSEEESHKKGEM. The segment covering 285-294 has biased composition (basic residues); the sequence is PRRCRTGRPR. A compositionally biased stretch (basic and acidic residues) spans 295-311; that stretch reads SKTDPSSEEESHKKGEM. Residues histidine 588, histidine 593, histidine 778, asparagine 782, and isoleucine 932 each coordinate Fe cation.

Belongs to the lipoxygenase family. Fe cation is required as a cofactor.

It localises to the plastid. It is found in the chloroplast. It catalyses the reaction (9Z,12Z)-octadecadienoate + O2 = (13S)-hydroperoxy-(9Z,11E)-octadecadienoate. The catalysed reaction is (9Z,12Z,15Z)-octadecatrienoate + O2 = (13S)-hydroperoxy-(9Z,11E,15Z)-octadecatrienoate. It functions in the pathway lipid metabolism; oxylipin biosynthesis. In terms of biological role, plant lipoxygenase may be involved in a number of diverse aspects of plant physiology including growth and development, pest resistance, and senescence or responses to wounding. This enzyme exhibits linoleate 13-lipoxygenase activity. The sequence is that of Lipoxygenase 2.2, chloroplastic (LOX2.2) from Hordeum vulgare (Barley).